The chain runs to 360 residues: Carbamoyl phosphate synthase small chain (360 aa).

Positions 1 to 169 (MTKRLLILED…TKTAYPAPGI (169 aa)) are CPSase. L-glutamine contacts are provided by Ser46, Gly220, and Gly222. The Glutamine amidotransferase type-1 domain maps to 172–358 (NIVLVDFGLK…LEMIDSWRCT (187 aa)). The active-site Nucleophile is the Cys247. The L-glutamine site is built by Met248, Gln251, Asn289, Gly291, and Tyr292. Catalysis depends on residues His331 and Asp333.

This sequence belongs to the CarA family. In terms of assembly, composed of two chains; the small (or glutamine) chain promotes the hydrolysis of glutamine to ammonia, which is used by the large (or ammonia) chain to synthesize carbamoyl phosphate. Tetramer of heterodimers (alpha,beta)4.

It carries out the reaction hydrogencarbonate + L-glutamine + 2 ATP + H2O = carbamoyl phosphate + L-glutamate + 2 ADP + phosphate + 2 H(+). The enzyme catalyses L-glutamine + H2O = L-glutamate + NH4(+). It functions in the pathway amino-acid biosynthesis; L-arginine biosynthesis; carbamoyl phosphate from bicarbonate: step 1/1. The protein operates within pyrimidine metabolism; UMP biosynthesis via de novo pathway; (S)-dihydroorotate from bicarbonate: step 1/3. Functionally, small subunit of the glutamine-dependent carbamoyl phosphate synthetase (CPSase). CPSase catalyzes the formation of carbamoyl phosphate from the ammonia moiety of glutamine, carbonate, and phosphate donated by ATP, constituting the first step of 2 biosynthetic pathways, one leading to arginine and/or urea and the other to pyrimidine nucleotides. The small subunit (glutamine amidotransferase) binds and cleaves glutamine to supply the large subunit with the substrate ammonia. In Streptococcus pyogenes serotype M18 (strain MGAS8232), this protein is Carbamoyl phosphate synthase small chain.